An 88-amino-acid chain; its full sequence is HssA/B-like protein 13 (88 aa).

The protein belongs to the hssA/B family.

The chain is HssA/B-like protein 13 (hssl13) from Dictyostelium discoideum (Social amoeba).